Reading from the N-terminus, the 40-residue chain is Sapecin-C (40 aa).

Disulfide bonds link Cys-3-Cys-30, Cys-16-Cys-36, and Cys-20-Cys-38.

This sequence belongs to the invertebrate defensin family. Type 1 subfamily. In terms of tissue distribution, hemocytes and fat body.

It is found in the secreted. Its function is as follows. Sapecins, which are potent bactericidal proteins, are produced in response to injury. Sapecin C is cytotoxic to Gram-positive bacteria. The chain is Sapecin-C from Sarcophaga peregrina (Flesh fly).